We begin with the raw amino-acid sequence, 367 residues long: Zinc finger CCCH domain-containing protein 56 (367 aa).

The disordered stretch occupies residues 38–80 (YNSQWNADGGGGGSSRAGSEQPPPGKKSRGGGGGEGGGNTSKS). Over residues 67–76 (GGGGGEGGGN) the composition is skewed to gly residues. 3 consecutive C3H1-type zinc fingers follow at residues 87–114 (FFKT…HGME), 169–197 (AYKG…HDEQ), and 245–273 (NWKT…HGAA).

The polypeptide is Zinc finger CCCH domain-containing protein 56 (Oryza sativa subsp. japonica (Rice)).